Reading from the N-terminus, the 100-residue chain is UPF0235 protein Cvib_0403 (100 aa).

The protein belongs to the UPF0235 family.

The sequence is that of UPF0235 protein Cvib_0403 from Chlorobium phaeovibrioides (strain DSM 265 / 1930) (Prosthecochloris vibrioformis (strain DSM 265)).